We begin with the raw amino-acid sequence, 301 residues long: Protoheme IX farnesyltransferase (301 aa).

Helical transmembrane passes span V29–V49, I51–F71, V96–V118, L123–L143, I151–G171, A177–I197, C223–M243, C244–W264, and F281–L301.

It belongs to the UbiA prenyltransferase family. Protoheme IX farnesyltransferase subfamily.

The protein resides in the cell inner membrane. It carries out the reaction heme b + (2E,6E)-farnesyl diphosphate + H2O = Fe(II)-heme o + diphosphate. It participates in porphyrin-containing compound metabolism; heme O biosynthesis; heme O from protoheme: step 1/1. Functionally, converts heme B (protoheme IX) to heme O by substitution of the vinyl group on carbon 2 of heme B porphyrin ring with a hydroxyethyl farnesyl side group. The chain is Protoheme IX farnesyltransferase from Shewanella halifaxensis (strain HAW-EB4).